The following is a 221-amino-acid chain: Keratin-associated protein 10-3 (221 aa).

18 tandem repeats follow at residues 26–30, 31–35, 36–40, 57–61, 79–83, 89–93, 99–103, 104–108, 109–113, 114–118, 119–123, 124–128, 136–140, 146–150, 151–155, 177–181, 188–192, and 210–214. The interval 26-214 is 18 X 5 AA repeats of C-C-X(3); sequence CCEPPCCATS…RLSSACCGLS (189 aa).

Belongs to the KRTAP type 10 family. In terms of assembly, interacts with hair keratins. In terms of tissue distribution, restricted to a narrow region of the hair fiber cuticle, lying approximately 20 cell layers above the apex of the dermal papilla of the hair root; not detected in any other tissues.

Functionally, in the hair cortex, hair keratin intermediate filaments are embedded in an interfilamentous matrix, consisting of hair keratin-associated proteins (KRTAP), which are essential for the formation of a rigid and resistant hair shaft through their extensive disulfide bond cross-linking with abundant cysteine residues of hair keratins. The matrix proteins include the high-sulfur and high-glycine-tyrosine keratins. The protein is Keratin-associated protein 10-3 (KRTAP10-3) of Homo sapiens (Human).